The chain runs to 185 residues: Serine/arginine-rich splicing factor RSZ21 (185 aa).

The 72-residue stretch at 2 to 73 (ARLYVGNLDP…WRVELSRNSS (72 aa)) folds into the RRM domain. Residues 86–103 (MKCYECGETGHFARECRL) form a CCHC-type zinc finger. The interval 104–185 (RIGPGGLGSG…DGGRYRRSRS (82 aa)) is disordered. Over residues 113-123 (GKRRSRSRSRS) the composition is skewed to basic residues. Low complexity-rich tracts occupy residues 124-138 (RSPQ…GRRS) and 151-162 (VSPVRGRSYSRS).

Belongs to the splicing factor SR family. Post-translationally, extensively phosphorylated on serine residues in the RS domain. In terms of tissue distribution, expressed in roots, leaves and immature seeds.

Its subcellular location is the nucleus. Involved in pre-mRNA splicing. This Oryza sativa subsp. japonica (Rice) protein is Serine/arginine-rich splicing factor RSZ21 (RSZP21).